Here is a 589-residue protein sequence, read N- to C-terminus: Peptide transporter PTR_A (589 aa).

The segment at 1–56 (MSETKPAANDLSNVPSASDSDKDNSLDKVHSLEKTGVHEDINKLPSSDLEQLEDDG) is disordered. Residues 19–42 (DSDKDNSLDKVHSLEKTGVHEDIN) show a composition bias toward basic and acidic residues. 4 consecutive transmembrane segments (helical) span residues 74–95 (IPLS…YYGL), 124–144 (ALSY…AWIA), 153–173 (AICI…ITSI), and 180–200 (NTSL…TGGV). The N-linked (GlcNAc...) asparagine glycan is linked to asparagine 233. Helical transmembrane passes span 236 to 256 (IQNV…SVIA), 266 to 286 (FWAG…VLLL), 345 to 365 (VYAC…GQMI), 388 to 408 (INAI…YPFI), 420 to 440 (IFWG…LQHF), 467 to 487 (IAIQ…ASIT), 502 to 522 (SFIM…GIAL), and 533 to 553 (WTYT…YIIF).

Belongs to the major facilitator superfamily. Proton-dependent oligopeptide transporter (POT/PTR) (TC 2.A.17) family.

Its subcellular location is the cell membrane. The enzyme catalyses a dipeptide(out) + H(+)(out) = a dipeptide(in) + H(+)(in). It catalyses the reaction an L-amino acid tripeptide(out) + H(+)(out) = an L-amino acid tripeptide(in) + H(+)(in). Functionally, peptide transporter that exploits the inwardly directed proton motive force to facilitate the cellular uptake of di/tripeptides. In Candidozyma auris (Yeast), this protein is Peptide transporter PTR_A.